The chain runs to 126 residues: Fluoride-specific ion channel FluC (126 aa).

The next 4 membrane-spanning stretches (helical) occupy residues 5–25 (LHFLAVGVGAAAGAWLRWLLG), 35–55 (WGTLAANLGGGYLIGLILGLI), 68–88 (ALVTGFLGGLTTFSTFSAEVV), and 99–119 (AAGYAVVSLAGSLCLTALGLA). Positions 75 and 78 each coordinate Na(+).

This sequence belongs to the fluoride channel Fluc/FEX (TC 1.A.43) family.

It is found in the cell inner membrane. The catalysed reaction is fluoride(in) = fluoride(out). Na(+) is not transported, but it plays an essential structural role and its presence is essential for fluoride channel function. Fluoride-specific ion channel. Important for reducing fluoride concentration in the cell, thus reducing its toxicity. The polypeptide is Fluoride-specific ion channel FluC (Bordetella avium (strain 197N)).